Here is a 192-residue protein sequence, read N- to C-terminus: Flavin prenyltransferase UbiX (192 aa).

FMN-binding positions include 10 to 12 (GAS), Ser36, 92 to 95 (SVAT), and Arg127. 2 residues coordinate dimethylallyl phosphate: Tyr157 and Lys173.

It belongs to the UbiX/PAD1 family.

The catalysed reaction is dimethylallyl phosphate + FMNH2 = prenylated FMNH2 + phosphate. In terms of biological role, flavin prenyltransferase that catalyzes the synthesis of the prenylated FMN cofactor (prenyl-FMN) for 4-hydroxy-3-polyprenylbenzoic acid decarboxylase UbiD. The prenyltransferase is metal-independent and links a dimethylallyl moiety from dimethylallyl monophosphate (DMAP) to the flavin N5 and C6 atoms of FMN. The polypeptide is Flavin prenyltransferase UbiX (Chlamydia trachomatis serovar D (strain ATCC VR-885 / DSM 19411 / UW-3/Cx)).